A 319-amino-acid polypeptide reads, in one-letter code: MKKSLTNLDLNLLLCLQLLMQERSVTKAAKRMNVTPSAVSKSLAKLRAWFDDPLFVNTPLGLAPTPLMVSMEQSLADWMQMGNQLLDKPHHQTPRGLKFELAAESPLMMIMFNSLSQQIYQRYPQATIKVRNWDYDSLEAITRGEVDIGFTGRESHPRSRELLSLLPLAIDFEVLFSDLPWVWLREDHPALREAWDLDTFLRYPHISICWEQSDTWALDDVLQEMGRKRHIALSLPGFEQSLFMAAQPDHTLIATAPRYCQHYNQLHQLPLVARPLPFDAQQREKLMVPFTLLWHKRNSHNPKIVWLRQAINTLCRRLI.

The region spanning 8-65 (LDLNLLLCLQLLMQERSVTKAAKRMNVTPSAVSKSLAKLRAWFDDPLFVNTPLGLAPT) is the HTH lysR-type domain. The segment at residues 25–44 (VTKAAKRMNVTPSAVSKSLA) is a DNA-binding region (H-T-H motif).

This sequence belongs to the LysR transcriptional regulatory family.

Involved in anaerobic NO protection. The chain is HTH-type transcriptional regulator YidZ from Salmonella agona (strain SL483).